Consider the following 281-residue polypeptide: ATP phosphoribosyltransferase (281 aa).

It belongs to the ATP phosphoribosyltransferase family. Long subfamily. The cofactor is Mg(2+).

The protein resides in the cytoplasm. It catalyses the reaction 1-(5-phospho-beta-D-ribosyl)-ATP + diphosphate = 5-phospho-alpha-D-ribose 1-diphosphate + ATP. It functions in the pathway amino-acid biosynthesis; L-histidine biosynthesis; L-histidine from 5-phospho-alpha-D-ribose 1-diphosphate: step 1/9. Its activity is regulated as follows. Feedback inhibited by histidine. Catalyzes the condensation of ATP and 5-phosphoribose 1-diphosphate to form N'-(5'-phosphoribosyl)-ATP (PR-ATP). Has a crucial role in the pathway because the rate of histidine biosynthesis seems to be controlled primarily by regulation of HisG enzymatic activity. The sequence is that of ATP phosphoribosyltransferase from Natronomonas pharaonis (strain ATCC 35678 / DSM 2160 / CIP 103997 / JCM 8858 / NBRC 14720 / NCIMB 2260 / Gabara) (Halobacterium pharaonis).